The sequence spans 84 residues: Small ribosomal subunit protein bS16 (84 aa).

This sequence belongs to the bacterial ribosomal protein bS16 family.

The chain is Small ribosomal subunit protein bS16 from Dichelobacter nodosus (strain VCS1703A).